Here is a 170-residue protein sequence, read N- to C-terminus: Protein SprT (170 aa).

The 142-residue stretch at 22–163 (LQQANLTLQT…RCRRCGKTLR (142 aa)) folds into the SprT-like domain. His78 contributes to the Zn(2+) binding site. Glu79 is a catalytic residue. His82 is a binding site for Zn(2+).

It belongs to the SprT family. Zn(2+) is required as a cofactor.

It is found in the cytoplasm. This is Protein SprT from Pectobacterium atrosepticum (strain SCRI 1043 / ATCC BAA-672) (Erwinia carotovora subsp. atroseptica).